Consider the following 497-residue polypeptide: Cobyric acid synthase (497 aa).

Residues 250 to 445 (EVTIAVIRLP…LHGIFNNGPW (196 aa)) form the GATase cobBQ-type domain. Cysteine 331 acts as the Nucleophile in catalysis. The active site involves histidine 437.

Belongs to the CobB/CobQ family. CobQ subfamily.

It participates in cofactor biosynthesis; adenosylcobalamin biosynthesis. Functionally, catalyzes amidations at positions B, D, E, and G on adenosylcobyrinic A,C-diamide. NH(2) groups are provided by glutamine, and one molecule of ATP is hydrogenolyzed for each amidation. This chain is Cobyric acid synthase, found in Acaryochloris marina (strain MBIC 11017).